The chain runs to 218 residues: Cytochrome b6 (218 aa).

Residues 35–55 (IFYCLGGITLVCFLIQFATGF) traverse the membrane as a helical segment. Cys-38 is a heme c binding site. Heme b is bound by residues His-89 and His-103. 3 helical membrane passes run 93–113 (ASMM…TGGF), 119–139 (LTWV…VTGY), and 189–209 (LHTF…FLMI). The heme b site is built by His-190 and His-205.

It belongs to the cytochrome b family. PetB subfamily. In terms of assembly, the 4 large subunits of the cytochrome b6-f complex are cytochrome b6, subunit IV (17 kDa polypeptide, PetD), cytochrome f and the Rieske protein, while the 4 small subunits are PetG, PetL, PetM and PetN. The complex functions as a dimer. Heme b serves as cofactor. Heme c is required as a cofactor.

The protein resides in the cellular thylakoid membrane. Functionally, component of the cytochrome b6-f complex, which mediates electron transfer between photosystem II (PSII) and photosystem I (PSI), cyclic electron flow around PSI, and state transitions. This Parasynechococcus marenigrum (strain WH8102) protein is Cytochrome b6.